Here is a 130-residue protein sequence, read N- to C-terminus: Small ribosomal subunit protein uS11 (130 aa).

Belongs to the universal ribosomal protein uS11 family. Part of the 30S ribosomal subunit. Interacts with proteins S7 and S18. Binds to IF-3.

Its function is as follows. Located on the platform of the 30S subunit, it bridges several disparate RNA helices of the 16S rRNA. Forms part of the Shine-Dalgarno cleft in the 70S ribosome. The polypeptide is Small ribosomal subunit protein uS11 (Caldicellulosiruptor bescii (strain ATCC BAA-1888 / DSM 6725 / KCTC 15123 / Z-1320) (Anaerocellum thermophilum)).